A 298-amino-acid chain; its full sequence is MSRSLEGKFAIITGGSRGIGEAIAHNLASKGCSLLLNYTSDSSRTRTESLCNTLSTTHKITCIPVQADLSDPAPAVNTIISAAKTHFTSPTTNTLTIDILINNAGVSKDRFLNDPSSGPIDPAYFNWHYTINVLAPLLLTQACAEYLPRKPAHSGRIINISSISSSLGFTGQSVYGGTKAALEAMTRTWARELADVATVNAVNPGPVVGDMYFATGEEFWKQMQGFQDNTPLSKLVDGEEAVEELLSEEQKRLIREKMGGRRPAFTREIAGVVGMLCTEDGAWCTGSVVCANGGLKFT.

NADP(+) contacts are provided by isoleucine 19, aspartate 68, and asparagine 103. Residues serine 161, serine 162, and tyrosine 175 each act as proton donor in the active site. NADP(+) contacts are provided by tyrosine 175, lysine 179, and valine 207. Lysine 179 functions as the Lowers pKa of active site Tyr in the catalytic mechanism.

It belongs to the short-chain dehydrogenases/reductases (SDR) family.

It carries out the reaction xylitol + NADP(+) = L-xylulose + NADPH + H(+). Its pathway is carbohydrate degradation; L-arabinose degradation via L-arabinitol; D-xylulose 5-phosphate from L-arabinose (fungal route): step 3/5. L-xylulose reductase involved in the catabolism of L-arabinose through an oxidoreductive pathway. Catalyzes the NADPH-dependent reduction of L-xylulose. The protein is L-xylulose reductase of Aspergillus niger (strain ATCC 1015 / CBS 113.46 / FGSC A1144 / LSHB Ac4 / NCTC 3858a / NRRL 328 / USDA 3528.7).